We begin with the raw amino-acid sequence, 174 residues long: Crossover junction endodeoxyribonuclease RuvC (174 aa).

Catalysis depends on residues D8, E68, and D140. Mg(2+) contacts are provided by D8, E68, and D140.

The protein belongs to the RuvC family. In terms of assembly, homodimer which binds Holliday junction (HJ) DNA. The HJ becomes 2-fold symmetrical on binding to RuvC with unstacked arms; it has a different conformation from HJ DNA in complex with RuvA. In the full resolvosome a probable DNA-RuvA(4)-RuvB(12)-RuvC(2) complex forms which resolves the HJ. It depends on Mg(2+) as a cofactor.

The protein localises to the cytoplasm. The catalysed reaction is Endonucleolytic cleavage at a junction such as a reciprocal single-stranded crossover between two homologous DNA duplexes (Holliday junction).. Its function is as follows. The RuvA-RuvB-RuvC complex processes Holliday junction (HJ) DNA during genetic recombination and DNA repair. Endonuclease that resolves HJ intermediates. Cleaves cruciform DNA by making single-stranded nicks across the HJ at symmetrical positions within the homologous arms, yielding a 5'-phosphate and a 3'-hydroxyl group; requires a central core of homology in the junction. The consensus cleavage sequence is 5'-(A/T)TT(C/G)-3'. Cleavage occurs on the 3'-side of the TT dinucleotide at the point of strand exchange. HJ branch migration catalyzed by RuvA-RuvB allows RuvC to scan DNA until it finds its consensus sequence, where it cleaves and resolves the cruciform DNA. The chain is Crossover junction endodeoxyribonuclease RuvC from Legionella pneumophila (strain Lens).